Reading from the N-terminus, the 561-residue chain is MQAALTLLEALCLQGLKQLVLCPGSRSGPLATAAGVLASQAKLQLVTAIDERSAAFLALGMATAHGRVVAVVTTSGTAVSNLLPAAVEADRSCQPLLLLTADRPVRLKNCGANQTVNQESFLLAACRWFGSGAADGIHTQANDALNALAVKAWQQAQGAGTGPPGAVHLNLPFEEPLHTTLEQQQQLASAALPPTACPEPSPGIGPALRLDPERPGVVVAGPWRGLTLSLEAHQQALHRWLNLSGWPLLADPLAALPPDCPNRIEHWELQLDRLSLPDDAQVLRLGPMPASRRLEAWLQRHQGPQLLITEGDPRPLDPLHTANQWSGGMAAWIAQQPGLKQATKPSVGTNDLSPWLETQLPLRGAVTEPALAYWLPQLLPEQLPVMLAASSPVRDWLTWGGYSCGRHRCFSFRGASGIDGTLSLAMGLAANLGPLALVTGDLALLHDSNGWLHASSAAAPPPLLVLLIDNGGGGIFQQLPIATPGFESLFAMPQQVDSLALAAAHGVPGRQVACLEDLQEALAWGLSQQRPVLLRLCSDRGRDAVLRQQLRAAAQNEGTEL.

This sequence belongs to the TPP enzyme family. MenD subfamily. In terms of assembly, homodimer. Mg(2+) serves as cofactor. Requires Mn(2+) as cofactor. Thiamine diphosphate is required as a cofactor.

The catalysed reaction is isochorismate + 2-oxoglutarate + H(+) = 5-enolpyruvoyl-6-hydroxy-2-succinyl-cyclohex-3-ene-1-carboxylate + CO2. It functions in the pathway quinol/quinone metabolism; 1,4-dihydroxy-2-naphthoate biosynthesis; 1,4-dihydroxy-2-naphthoate from chorismate: step 2/7. It participates in cofactor biosynthesis; phylloquinone biosynthesis. Functionally, catalyzes the thiamine diphosphate-dependent decarboxylation of 2-oxoglutarate and the subsequent addition of the resulting succinic semialdehyde-thiamine pyrophosphate anion to isochorismate to yield 2-succinyl-5-enolpyruvyl-6-hydroxy-3-cyclohexene-1-carboxylate (SEPHCHC). In Synechococcus sp. (strain CC9605), this protein is 2-succinyl-5-enolpyruvyl-6-hydroxy-3-cyclohexene-1-carboxylate synthase.